Consider the following 219-residue polypeptide: MIKNGELKPGDKLDSVQALAESFQVSRSAVREALSALKAMGLVEMKQGEGTYLKEFELNQISQPLSAALLMKKEDVKQLLEVRKLLEIGVASLAAEKRTEADLERIQDALKEMGSIEADGELGEKADFAFHLALADASQNELLKHLMNHVSSLLLETMRETRKIWLFSKKTSVQRLYEEHERIYNAVAAGNGAQAEAAMLAHLTNVEDVLSGYFEENVQ.

The HTH gntR-type domain occupies 1 to 56; that stretch reads MIKNGELKPGDKLDSVQALAESFQVSRSAVREALSALKAMGLVEMKQGEGTYLKEF. Positions 16-35 form a DNA-binding region, H-T-H motif; the sequence is VQALAESFQVSRSAVREALS.

Its function is as follows. Negatively regulates the transcription of the lutABC operon, which is required for L-lactate utilization. LutR activity is regulated by lactate, since presence of L-lactate, that probably binds to LutR, leads to derepression of the operon. Also appears to be essential for bacilysin biosynthesis. This chain is HTH-type transcriptional regulator LutR (lutR), found in Bacillus subtilis (strain 168).